A 1073-amino-acid chain; its full sequence is Receptor-type guanylate cyclase gcy-23 (1073 aa).

An N-terminal signal peptide occupies residues 1–15; the sequence is MRRELFIFLLLLGEC. The Extracellular portion of the chain corresponds to 16–458; that stretch reads ANVKVKVGHI…FRNEKCDYTT (443 aa). N-linked (GlcNAc...) asparagine glycosylation occurs at Asn-336. A helical membrane pass occupies residues 459-479; sequence LIIGGCIVLLIILLIICFFIL. Residues 480–1073 are Cytoplasmic-facing; that stretch reads SRVCENRALA…QQQNFSQLGI (594 aa). Residues 508 to 808 enclose the Protein kinase domain; it reads MKSMLSIGSS…RVRLNTENYL (301 aa). Residues 813–844 are a coiled coil; sequence SLVDQMMRMMEQYANNLEKLVAERTGMLEEAN. The 131-residue stretch at 878–1008 folds into the Guanylate cyclase domain; it reads TVMFSDIVGF…DTVNVASRME (131 aa). The Mg(2+) site is built by Asp-883, Ile-884, and Asp-927.

This sequence belongs to the adenylyl cyclase class-4/guanylyl cyclase family. As to expression, expressed specifically in AFD sensory neurons.

It is found in the cell membrane. Its subcellular location is the cell projection. The protein localises to the cilium. The catalysed reaction is GTP = 3',5'-cyclic GMP + diphosphate. Its function is as follows. Guanylate cyclase involved in the production of the second messenger cGMP. Regulates thermotaxis responses in AFD sensory neurons. May regulate AFD neuronal activity such as calcium responses to temperature gradients. The protein is Receptor-type guanylate cyclase gcy-23 of Caenorhabditis elegans.